The following is a 654-amino-acid chain: Endoplasmic reticulum chaperone BiP (654 aa).

Positions 1 to 18 (MKLSLVAAMLLLLSAARA) are cleaved as a signal peptide. The interval 1–80 (MKLSLVAAML…EGERLIGDAA (80 aa)) is required for interaction with ELAPOR1. 36-39 (GTTY) contacts ATP. Ser-86 carries the post-translational modification Phosphoserine. Lys-96 provides a ligand contact to ATP. An N6-acetyllysine modification is found at Lys-125. Positions 125–280 (KPYIQVDIGG…KKKTGKDVRK (156 aa)) are nucleotide-binding (NBD). The residue at position 160 (Tyr-160) is a 3'-nitrotyrosine. The residue at position 213 (Lys-213) is an N6-acetyllysine. 227–229 (GGT) lines the ATP pocket. Lys-271 bears the N6-acetyllysine mark. ATP is bound at residue 293-300 (EKAKRALS). Lys-326 carries the N6-acetyllysine modification. Lys-352 participates in a covalent cross-link: Glycyl lysine isopeptide (Lys-Gly) (interchain with G-Cter in SUMO2). Lys-353 is modified (N6-acetyllysine; alternate). Residue Lys-353 forms a Glycyl lysine isopeptide (Lys-Gly) (interchain with G-Cter in SUMO1); alternate linkage. Residue 364–367 (GSTR) participates in ATP binding. Residues 409–419 (QDTGDLALLDV) form an interdomain linker region. The interval 420 to 500 (CPLTLGIETV…PRGVPQIEVT (81 aa)) is substrate-binding (SBD). The residue at position 447 (Lys-447) is an N6-succinyllysine. Residue Arg-492 is modified to Omega-N-methylarginine. Thr-518 carries the O-AMP-threonine; alternate modification. Residue Thr-518 is modified to Phosphothreonine; alternate. The residue at position 585 (Lys-585) is an N6,N6,N6-trimethyllysine; by METTL21A; in vitro. Lys-585 bears the N6,N6-dimethyllysine; alternate mark. Residue Lys-585 is modified to N6-methyllysine; alternate. Lys-591 carries the post-translational modification N6-methyllysine. Residues 633-654 (KLYGSAGPPPTGEEDTAEKDEL) are disordered. Residues Thr-643 and Thr-648 each carry the phosphothreonine modification. Positions 644–654 (GEEDTAEKDEL) are enriched in acidic residues. The Prevents secretion from ER motif lies at 651–654 (KDEL).

It belongs to the heat shock protein 70 family. Monomer and homooligomer; homooligomerization via the interdomain linker inactivates the chaperone activity and acts as a storage of HSPA5/BiP molecules. Interacts with DNAJC1 (via J domain). Component of an EIF2 complex at least composed of CELF1/CUGBP1, CALR, CALR3, EIF2S1, EIF2S2, HSP90B1 and HSPA5. Part of a large chaperone multiprotein complex comprising DNAJB11, HSP90B1, HSPA5, HYOU, PDIA2, PDIA4, PDIA6, PPIB, SDF2L1, UGGT1 and very small amounts of ERP29, but not, or at very low levels, CALR nor CANX. Interacts with TMEM132A and TRIM21. May form a complex with ERLEC1, OS9, SEL1L and SYVN1. Interacts with DNAJC10. Interacts with DNAJB9/ERdj4; leading to recruit HSPA5/BiP to ERN1/IRE1. Interacts with ERN1/IRE1 (via luminal domain); the interaction takes place following interaction with DNAJB9/ERdj4 and leads to inactivate ERN1/IRE1, the interaction also competitively inhibits ERN1 interaction with MANF. Interacts directly with MANF (via SAP domain); the interaction inhibits ATP binding to HSPA5/BiP and subsequent nucleotide exchange. Interacts with EIF2AK3/PERK (via luminal domain); interaction leads to inactivate EIF2AK3/PERK. Interacts with MX1. Interacts with METTL23. Interacts with CEMIP; the interaction induces calcium leakage from the endoplasmic reticulum and cell migration. Interacts with PCSK4 form; the interaction takes place in the endoplasmic reticulum. Interacts with CIPC. Interacts with CCDC88B (via C-terminus); the interaction opposes ERN1-mediated JNK activation, protecting against apoptosis. Interacts with INPP5K; necessary for INPP5K localization at the endoplasmic reticulum. Interacts with MANF; the interaction is direct. Interacts with LOXL2; leading to activate the ERN1/IRE1-XBP1 pathway of the unfolded protein response. Interacts with CLU under stressed condition; interaction increases CLU protein stability; facilitates its retrotranslocation and redistribution to the mitochondria; cooperatively suppress stress-induced apoptosis by stabilizing mitochondrial membrane integrity. Interacts with CCDC47. Interacts with CLN3. Interacts with ELAPOR1; may regulate the function of HSPA5 in apoptosis and cell proliferation. Interacts with CASP7. Interacts with ILDR2; the interaction stabilizes ILDR2 expression. Interacts with ADAM7. In terms of processing, in unstressed cells, AMPylation at Thr-518 by FICD inactivates the chaperome activity: AMPylated form is locked in a relatively inert state and only weakly stimulated by J domain-containing proteins. In response to endoplasmic reticulum stress, de-AMPylation by the same protein, FICD, restores the chaperone activity.

The protein localises to the endoplasmic reticulum lumen. It localises to the melanosome. Its subcellular location is the cytoplasm. It is found in the cell surface. The enzyme catalyses ATP + H2O = ADP + phosphate + H(+). With respect to regulation, the chaperone activity is regulated by ATP-induced allosteric coupling of the nucleotide-binding (NBD) and substrate-binding (SBD) domains. In the ADP-bound and nucleotide-free (apo) states, the two domains have little interaction. In contrast, in the ATP-bound state the two domains are tightly coupled, which results in drastically accelerated kinetics in both binding and release of polypeptide substrates. J domain-containing co-chaperones (DNAJB9/ERdj4 or DNAJC10/ERdj5) stimulate the ATPase activity and are required for efficient substrate recognition by HSPA5/BiP. Homooligomerization inactivates participating HSPA5/BiP protomers and probably act as reservoirs to store HSPA5/BiP molecules when they are not needed by the cell. Its function is as follows. Endoplasmic reticulum chaperone that plays a key role in protein folding and quality control in the endoplasmic reticulum lumen. Involved in the correct folding of proteins and degradation of misfolded proteins via its interaction with DNAJC10/ERdj5, probably to facilitate the release of DNAJC10/ERdj5 from its substrate. Acts as a key repressor of the EIF2AK3/PERK and ERN1/IRE1-mediated unfolded protein response (UPR). In the unstressed endoplasmic reticulum, recruited by DNAJB9/ERdj4 to the luminal region of ERN1/IRE1, leading to disrupt the dimerization of ERN1/IRE1, thereby inactivating ERN1/IRE1. Also binds and inactivates EIF2AK3/PERK in unstressed cells. Accumulation of misfolded protein in the endoplasmic reticulum causes release of HSPA5/BiP from ERN1/IRE1 and EIF2AK3/PERK, allowing their homodimerization and subsequent activation. Plays an auxiliary role in post-translational transport of small presecretory proteins across endoplasmic reticulum (ER). May function as an allosteric modulator for SEC61 channel-forming translocon complex, likely cooperating with SEC62 to enable the productive insertion of these precursors into SEC61 channel. Appears to specifically regulate translocation of precursors having inhibitory residues in their mature region that weaken channel gating. May also play a role in apoptosis and cell proliferation. This chain is Endoplasmic reticulum chaperone BiP, found in Pongo abelii (Sumatran orangutan).